Consider the following 351-residue polypeptide: sn-glycerol-3-phosphate import ATP-binding protein UgpC (351 aa).

In terms of domain architecture, ABC transporter spans Ile-4 to Ile-235. Gly-37–Ser-44 contacts ATP.

The protein belongs to the ABC transporter superfamily. sn-glycerol-3-phosphate importer (TC 3.A.1.1.3) family. In terms of assembly, the complex is composed of two ATP-binding proteins (UgpC), two transmembrane proteins (UgpA and UgpE) and a solute-binding protein (UgpB).

Its subcellular location is the cell inner membrane. The enzyme catalyses sn-glycerol 3-phosphate(out) + ATP + H2O = sn-glycerol 3-phosphate(in) + ADP + phosphate + H(+). In terms of biological role, part of the ABC transporter complex UgpBAEC involved in sn-glycerol-3-phosphate (G3P) import. Responsible for energy coupling to the transport system. The protein is sn-glycerol-3-phosphate import ATP-binding protein UgpC of Brucella abortus (strain 2308).